The following is a 468-amino-acid chain: Putative proline/betaine transporter (468 aa).

12 helical membrane passes run 20–42 (VFAT…YTTA), 63–83 (FAAL…FGII), 91–111 (VVLT…GVLP), 115–135 (MIGL…GFST), 164–184 (IGTL…SFFL), 191–211 (AWGW…GLYL), 246–266 (ILVC…VTAY), 284–304 (VLIT…GKLA), 312–332 (VFLI…SLLN), 336–356 (LPFI…YEAT), 376–396 (VTFN…NSWL), and 403–423 (IYAP…VIAV).

Belongs to the major facilitator superfamily. Metabolite:H+ Symporter (MHS) family (TC 2.A.1.6) family.

It is found in the cell membrane. May be a proton symporter involved in the uptake of osmolytes such as proline and glycine betaine. The chain is Putative proline/betaine transporter (proP) from Staphylococcus haemolyticus (strain JCSC1435).